Reading from the N-terminus, the 425-residue chain is Enolase (425 aa).

Glutamine 162 lines the (2R)-2-phosphoglycerate pocket. The Proton donor role is filled by glutamate 204. Mg(2+) contacts are provided by aspartate 241, glutamate 282, and aspartate 309. (2R)-2-phosphoglycerate is bound by residues lysine 334, arginine 363, serine 364, and lysine 385. The active-site Proton acceptor is the lysine 334.

This sequence belongs to the enolase family. Mg(2+) serves as cofactor.

Its subcellular location is the cytoplasm. The protein resides in the secreted. The protein localises to the cell surface. The enzyme catalyses (2R)-2-phosphoglycerate = phosphoenolpyruvate + H2O. It participates in carbohydrate degradation; glycolysis; pyruvate from D-glyceraldehyde 3-phosphate: step 4/5. Its function is as follows. Catalyzes the reversible conversion of 2-phosphoglycerate (2-PG) into phosphoenolpyruvate (PEP). It is essential for the degradation of carbohydrates via glycolysis. This is Enolase from Corynebacterium diphtheriae (strain ATCC 700971 / NCTC 13129 / Biotype gravis).